Reading from the N-terminus, the 274-residue chain is Diaminopimelate epimerase (274 aa).

The substrate site is built by Asn-11, Gln-44, and Asn-64. The active-site Proton donor is the Cys-73. Substrate is bound by residues 74–75 (GN), Asn-157, Asn-190, and 208–209 (ER). The Proton acceptor role is filled by Cys-217. 218–219 (GS) provides a ligand contact to substrate.

The protein belongs to the diaminopimelate epimerase family. In terms of assembly, homodimer.

Its subcellular location is the cytoplasm. It catalyses the reaction (2S,6S)-2,6-diaminopimelate = meso-2,6-diaminopimelate. It functions in the pathway amino-acid biosynthesis; L-lysine biosynthesis via DAP pathway; DL-2,6-diaminopimelate from LL-2,6-diaminopimelate: step 1/1. In terms of biological role, catalyzes the stereoinversion of LL-2,6-diaminopimelate (L,L-DAP) to meso-diaminopimelate (meso-DAP), a precursor of L-lysine and an essential component of the bacterial peptidoglycan. This chain is Diaminopimelate epimerase, found in Sodalis glossinidius (strain morsitans).